A 123-amino-acid polypeptide reads, in one-letter code: Ribosome-binding factor A (123 aa).

The protein belongs to the RbfA family. Monomer. Binds 30S ribosomal subunits, but not 50S ribosomal subunits or 70S ribosomes.

It is found in the cytoplasm. One of several proteins that assist in the late maturation steps of the functional core of the 30S ribosomal subunit. Associates with free 30S ribosomal subunits (but not with 30S subunits that are part of 70S ribosomes or polysomes). Required for efficient processing of 16S rRNA. May interact with the 5'-terminal helix region of 16S rRNA. This chain is Ribosome-binding factor A, found in Cupriavidus taiwanensis (strain DSM 17343 / BCRC 17206 / CCUG 44338 / CIP 107171 / LMG 19424 / R1) (Ralstonia taiwanensis (strain LMG 19424)).